Reading from the N-terminus, the 307-residue chain is Protease HtpX homolog 1 (307 aa).

Helical transmembrane passes span 7–27 (LKTL…IITY) and 38–60 (IFTA…YLVG). Position 133 (His133) interacts with Zn(2+). Glu134 is an active-site residue. His137 contacts Zn(2+). 2 helical membrane-spanning segments follow: residues 145–165 (IGMA…FLLF) and 180–200 (LILG…TFLL). Glu212 provides a ligand contact to Zn(2+).

Belongs to the peptidase M48B family. Zn(2+) serves as cofactor.

The protein resides in the cell membrane. This Sulfolobus acidocaldarius (strain ATCC 33909 / DSM 639 / JCM 8929 / NBRC 15157 / NCIMB 11770) protein is Protease HtpX homolog 1.